The chain runs to 196 residues: MEKFTTHTGVGVPLTRSNVDTDQIIPAVYLKRVTRTGFEDGLFNNWRTKDPNFVLNNEAYRNGSVLVAGPDFGTGSSREHAVWALKDYGFAVVLSSRFADIFRGNAGKAGLLAAQMEQTDIELLWKQLEQTPGAQVTVSLEERTVTCEGNVYPFFVDDYTRWRLMEGLDDVGLTLRKEAEIAAFEARRPSFKPVTQ.

This sequence belongs to the LeuD family. LeuD type 1 subfamily. As to quaternary structure, heterodimer of LeuC and LeuD.

The enzyme catalyses (2R,3S)-3-isopropylmalate = (2S)-2-isopropylmalate. The protein operates within amino-acid biosynthesis; L-leucine biosynthesis; L-leucine from 3-methyl-2-oxobutanoate: step 2/4. In terms of biological role, catalyzes the isomerization between 2-isopropylmalate and 3-isopropylmalate, via the formation of 2-isopropylmaleate. In Corynebacterium diphtheriae (strain ATCC 700971 / NCTC 13129 / Biotype gravis), this protein is 3-isopropylmalate dehydratase small subunit.